The following is a 224-amino-acid chain: ATP-dependent dethiobiotin synthetase BioD (224 aa).

13–18 (NVGKTI) serves as a coordination point for ATP. Threonine 17 serves as a coordination point for Mg(2+). Residue lysine 38 is part of the active site. Serine 42 contacts substrate. Residues aspartate 55, 116 to 119 (EGAG), 176 to 177 (NN), and asparagine 211 contribute to the ATP site. 2 residues coordinate Mg(2+): aspartate 55 and glutamate 116.

Belongs to the dethiobiotin synthetase family. In terms of assembly, homodimer. Mg(2+) serves as cofactor.

The protein resides in the cytoplasm. It catalyses the reaction (7R,8S)-7,8-diammoniononanoate + CO2 + ATP = (4R,5S)-dethiobiotin + ADP + phosphate + 3 H(+). It functions in the pathway cofactor biosynthesis; biotin biosynthesis; biotin from 7,8-diaminononanoate: step 1/2. In terms of biological role, catalyzes a mechanistically unusual reaction, the ATP-dependent insertion of CO2 between the N7 and N8 nitrogen atoms of 7,8-diaminopelargonic acid (DAPA, also called 7,8-diammoniononanoate) to form a ureido ring. The chain is ATP-dependent dethiobiotin synthetase BioD from Buchnera aphidicola subsp. Acyrthosiphon pisum (strain 5A).